The primary structure comprises 365 residues: Palmitoyltransferase ZDHHC20 (365 aa).

Residues 1–14 lie on the Cytoplasmic side of the membrane; the sequence is MAPWTLWRCCQRVV. Residues 15 to 35 traverse the membrane as a helical segment; the sequence is GWVPVLFITFVVVWSYYAYVV. Topologically, residues 36–53 are lumenal; it reads ELCVFTIFGNEENGKTVV. Residues 54–74 traverse the membrane as a helical segment; it reads YLVAFHLFFVMFVWSYWMTIF. Residues 75-169 are Cytoplasmic-facing; it reads TSPASPSKEF…NNCVGFSNYK (95 aa). The 51-residue stretch at 126–176 folds into the DHHC domain; sequence RYCEKCQLIKPDRAHHCSACDSCILKMDHHCPWVNNCVGFSNYKFFLLFLL. Zn(2+) is bound by residues Cys-128 and Cys-131. Substrate is bound by residues Lys-135 and 140-143; that span reads HHCS. His-141, Cys-142, Cys-145, Cys-148, and His-155 together coordinate Zn(2+). Cys-156 (S-palmitoyl cysteine intermediate) is an active-site residue. Cys-162 provides a ligand contact to Zn(2+). Residues 170 to 190 traverse the membrane as a helical segment; the sequence is FFLLFLLYSLLYCLFVAATVL. Over 191–207 the chain is Lumenal; the sequence is EYFIKFWTNELTDTRAK. The chain crosses the membrane as a helical span at residues 208–231; the sequence is FHVLFLFFVSAMFFISVLSLFSYH. At 232 to 365 the chain is on the cytoplasmic side; that stretch reads CWLVGKNRTT…NNHVTVAIEN (134 aa). Phosphoserine is present on residues Ser-305, Ser-330, and Ser-339.

The protein belongs to the DHHC palmitoyltransferase family. Post-translationally, autopalmitoylated (in vitro).

The protein localises to the golgi apparatus membrane. Its subcellular location is the cell membrane. It localises to the cytoplasm. The protein resides in the perinuclear region. It is found in the endoplasmic reticulum membrane. The protein localises to the endoplasmic reticulum-Golgi intermediate compartment membrane. It carries out the reaction L-cysteinyl-[protein] + hexadecanoyl-CoA = S-hexadecanoyl-L-cysteinyl-[protein] + CoA. The enzyme catalyses L-cysteinyl-[protein] + tetradecanoyl-CoA = S-tetradecanoyl-L-cysteinyl-[protein] + CoA. The catalysed reaction is L-cysteinyl-[protein] + octadecanoyl-CoA = S-octadecanoyl-L-cysteinyl-[protein] + CoA. In terms of biological role, palmitoyltransferase that could catalyze the addition of palmitate onto various protein substrates. Catalyzes palmitoylation of Cys residues in the cytoplasmic C-terminus of EGFR, and modulates the duration of EGFR signaling by modulating palmitoylation-dependent EGFR internalization and degradation. Has a preference for acyl-CoA with C16 fatty acid chains. Can also utilize acyl-CoA with C14 and C18 fatty acid chains. May palmitoylate CALHM1 subunit of gustatory voltage-gated ion channels and modulate channel gating and kinetics. (Microbial infection) Dominant palmitoyltransferase responsible for lipidation of SARS coronavirus-2/SARS-CoV-2 spike protein. Through a sequential action with ZDHHC9, rapidly and efficiently palmitoylates spike protein following its synthesis in the endoplasmic reticulum (ER). In the infected cell, promotes spike biogenesis by protecting it from premature ER degradation, increases half-life and controls the lipid organization of its immediate membrane environment. Once the virus has formed, spike palmitoylation controls fusion with the target cell. This is Palmitoyltransferase ZDHHC20 from Homo sapiens (Human).